We begin with the raw amino-acid sequence, 160 residues long: Probable NADH dehydrogenase [ubiquinone] 1 beta subcomplex subunit 2, mitochondrial (160 aa).

The protein belongs to the complex I NDUFB2 subunit family. As to quaternary structure, complex I is composed of 45 different subunits.

Its subcellular location is the mitochondrion inner membrane. Functionally, accessory subunit of the mitochondrial membrane respiratory chain NADH dehydrogenase (Complex I), that is believed not to be involved in catalysis. Complex I functions in the transfer of electrons from NADH to the respiratory chain. The immediate electron acceptor for the enzyme is believed to be ubiquinone. The polypeptide is Probable NADH dehydrogenase [ubiquinone] 1 beta subcomplex subunit 2, mitochondrial (Caenorhabditis elegans).